We begin with the raw amino-acid sequence, 379 residues long: Beta sliding clamp (379 aa).

This sequence belongs to the beta sliding clamp family. Forms a ring-shaped head-to-tail homodimer around DNA which binds and tethers DNA polymerases and other proteins to the DNA. The DNA replisome complex has a single clamp-loading complex (3 tau and 1 each of delta, delta', psi and chi subunits) which binds 3 Pol III cores (1 core on the leading strand and 2 on the lagging strand) each with a beta sliding clamp dimer. Additional proteins in the replisome are other copies of gamma, psi and chi, Ssb, DNA helicase and RNA primase.

The protein localises to the cytoplasm. In terms of biological role, confers DNA tethering and processivity to DNA polymerases and other proteins. Acts as a clamp, forming a ring around DNA (a reaction catalyzed by the clamp-loading complex) which diffuses in an ATP-independent manner freely and bidirectionally along dsDNA. Initially characterized for its ability to contact the catalytic subunit of DNA polymerase III (Pol III), a complex, multichain enzyme responsible for most of the replicative synthesis in bacteria; Pol III exhibits 3'-5' exonuclease proofreading activity. The beta chain is required for initiation of replication as well as for processivity of DNA replication. This is Beta sliding clamp (dnaN) from Rickettsia felis (strain ATCC VR-1525 / URRWXCal2) (Rickettsia azadi).